The sequence spans 367 residues: Uroporphyrinogen decarboxylase (367 aa).

At M1 the chain carries N-acetylmethionine. Residues R37, A39, R41, R50, D86, Y164, S219, and H339 each contribute to the coproporphyrinogen I site. Coproporphyrinogen III-binding residues include R37, A39, and R41. 4 residues coordinate coproporphyrinogen III: D86, Y164, S219, and H339.

The protein belongs to the uroporphyrinogen decarboxylase family. As to quaternary structure, homodimer.

The protein localises to the cytoplasm. Its subcellular location is the cytosol. The catalysed reaction is uroporphyrinogen III + 4 H(+) = coproporphyrinogen III + 4 CO2. It carries out the reaction uroporphyrinogen I + 4 H(+) = coproporphyrinogen I + 4 CO2. The protein operates within porphyrin-containing compound metabolism; protoporphyrin-IX biosynthesis; coproporphyrinogen-III from 5-aminolevulinate: step 4/4. In terms of biological role, catalyzes the sequential decarboxylation of the four acetate side chains of uroporphyrinogen to form coproporphyrinogen and participates in the fifth step in the heme biosynthetic pathway. Isomer I or isomer III of uroporphyrinogen may serve as substrate, but only coproporphyrinogen III can ultimately be converted to heme. In vitro also decarboxylates pentacarboxylate porphyrinogen I. In Mus musculus (Mouse), this protein is Uroporphyrinogen decarboxylase.